A 299-amino-acid chain; its full sequence is Zinc import ATP-binding protein ZnuC (299 aa).

The region spanning 13 to 228 is the ABC transporter domain; sequence VSLANAGVQR…PEYMRLFGGT (216 aa). 45–52 contacts ATP; that stretch reads GPNGSGKS.

This sequence belongs to the ABC transporter superfamily. Zinc importer (TC 3.A.1.15.5) family. In terms of assembly, the complex is composed of two ATP-binding proteins (ZnuC), two transmembrane proteins (ZnuB) and a solute-binding protein (ZnuA).

Its subcellular location is the cell inner membrane. It carries out the reaction Zn(2+)(out) + ATP(in) + H2O(in) = Zn(2+)(in) + ADP(in) + phosphate(in) + H(+)(in). Functionally, part of the ABC transporter complex ZnuABC involved in zinc import. Responsible for energy coupling to the transport system. The polypeptide is Zinc import ATP-binding protein ZnuC (Agrobacterium fabrum (strain C58 / ATCC 33970) (Agrobacterium tumefaciens (strain C58))).